The following is a 281-amino-acid chain: CDAN1-interacting nuclease 1 (281 aa).

The protein localises to the nucleus. The protein resides in the cytoplasm. Functionally, plays a role in erythroid cell differentiation. This Bos taurus (Bovine) protein is CDAN1-interacting nuclease 1 (CDIN1).